Here is a 481-residue protein sequence, read N- to C-terminus: Guanine nucleotide exchange factor C9orf72 homolog (481 aa).

The uDENN C9ORF72-type domain maps to 23–194 (SPLLAATFAY…ELLASMKSHS (172 aa)). Residues 200-343 (DIADTVLNDD…SELTAFWRAT (144 aa)) enclose the cDENN C9ORF72-type domain. Residues 370 to 464 (VLHRDTLVKA…IKPGLHSFIF (95 aa)) form the dDENN C9ORF72-type domain. The interval 461–481 (SFIFGRPFYTSVQERDVLMTF) is required for the homodimerization of the C9orf72-SMCR8 complex.

In terms of assembly, component of the C9orf72-SMCR8 complex, at least composed of C9orf72, SMCR8 and WDR41. The complex is formed of two protomers, each individually consisting of one molecule each of C9orf72, SMCR8 and WDR41. The protomers homodimerize via an interaction between C9orf72 (via C-terminus) and SMCR8 (via N-terminus). Within each protomer SMCR8 (via DENN domain) acts as a bridging protein between WDR41 (via C-terminus and N-terminus) and C9orf72 (via C-terminus). The C9orf72-SMCR8 complex associates with the ULK1/ATG1 kinase complex. Interacts with ULK1/ATG1 kinase complex members ULK1, ATG13 and RB1CC1. Interacts with SMCR8; the interaction is direct. Interacts with HNRNPA1, HNRNPA2B1 and UBQLN2. Interacts with small Rab GTPase RAB1A; the interaction mediates recruitment of RAB1A to the ULK1/ATG1 kinase complex. Also interacts with small Rab GTPase RAB7A. Interacts with cofilin. Interacts with GTP-binding proteins ARF1 and ARF6. Interacts with the DLG4/PSD-95. Interacts with CARM1 (via PH domain-like fold). Interacts with RAB39A and RAB39B (in GDP-bound forms); functions as GEF for RAB39A and RAB39B. As to expression, expressed in postnatal cerebellum and cortex (at protein level). Neuronal expression is detected in several regions of the adult brain and spinal cord. Prominent expression also observed in embryonic and early postnatal neurons including retinal ganglion cells, sensory neurons in the olfactory epithelium and in dorsal root ganglia, and spinal motor neurons. Expressed in the developing cerebral cortex, cerebellum, olfactory bulb, hippocampus and spinal cord in the embryo and in P0 cortical neurons and astrocytes. Also expressed in non-neuronal tissues such as kidney and tooth. In the spleen, highly expressed in myeloid cells compared to B cell and T cell populations where expression is much lower. In the brain, highly expressed in microglia. In terms of tissue distribution, expressed in the forebrain, including in the glomerular layer of the olfactory bulb (at protein level).

The protein resides in the nucleus. It is found in the cytoplasm. Its subcellular location is the P-body. The protein localises to the stress granule. It localises to the endosome. The protein resides in the lysosome. It is found in the cytoplasmic vesicle. Its subcellular location is the autophagosome. The protein localises to the autolysosome. It localises to the secreted. The protein resides in the cell projection. It is found in the axon. Its subcellular location is the growth cone. The protein localises to the perikaryon. It localises to the dendrite. The protein resides in the presynapse. It is found in the postsynapse. In terms of biological role, acts as a guanine-nucleotide releasing factor (GEF) for Rab GTPases by promoting the conversion of inactive RAB-GDP to the active form RAB-GTP. Acts as a GEF for RAB39A which enables HOPS-mediated autophagosome-lysosome membrane tethering and fusion in mammalian autophagy. Component of the C9orf72-SMCR8 complex where both subunits display GEF activity and that regulates autophagy. As part of the C9orf72-SMCR8-WDR41 (CSW) complex, functions as GEF for RAB8A, and RAB39B, thereby promoting autophagosome maturation. As part of the C9orf72-SMCR8 complex, also functions as GTPase activating protein (GAP) for RAB8A and RAB11A in vitro. The C9orf72-SMCR8 complex also acts as a regulator of autophagy initiation by interacting with the ULK1/ATG1 kinase complex and modulating its protein kinase activity. Promotes initiation of autophagy by regulating the RAB1A-dependent trafficking of the ULK1/ATG1 kinase complex to the phagophore which leads to autophagosome formation. Acts as a regulator of mTORC1 signaling by promoting phosphorylation of mTORC1 substrates. Plays a role in endosomal trafficking. May be involved in regulating the maturation of phagosomes to lysosomes. Promotes the lysosomal localization and lysosome-mediated degradation of CARM1 which leads to inhibition of starvation-induced lipid metabolism. Regulates actin dynamics in motor neurons by inhibiting the GTP-binding activity of ARF6, leading to ARF6 inactivation. This reduces the activity of the LIMK1 and LIMK2 kinases which are responsible for phosphorylation and inactivation of CFL1/cofilin, leading to cofilin activation. Positively regulates axon extension and axon growth cone size in spinal motor neurons. Required for SMCR8 protein expression and localization at pre- and post-synaptic compartments in the forebrain, also regulates protein abundance of RAB3A and GRIA1/GLUR1 in post-synaptic compartments in the forebrain and hippocampus. Plays a role within the hematopoietic system in restricting inflammation and the development of autoimmunity. This chain is Guanine nucleotide exchange factor C9orf72 homolog, found in Mus musculus (Mouse).